Here is a 126-residue protein sequence, read N- to C-terminus: Small ribosomal subunit protein uS13 (126 aa).

Positions 98–126 (VRGQSTKNNARTRKGKRKTVANKKKAAKK) are disordered. Residues 107 to 126 (ARTRKGKRKTVANKKKAAKK) are compositionally biased toward basic residues.

Belongs to the universal ribosomal protein uS13 family. Part of the 30S ribosomal subunit. Forms a loose heterodimer with protein S19. Forms two bridges to the 50S subunit in the 70S ribosome.

In terms of biological role, located at the top of the head of the 30S subunit, it contacts several helices of the 16S rRNA. In the 70S ribosome it contacts the 23S rRNA (bridge B1a) and protein L5 of the 50S subunit (bridge B1b), connecting the 2 subunits; these bridges are implicated in subunit movement. Contacts the tRNAs in the A and P-sites. The polypeptide is Small ribosomal subunit protein uS13 (Amoebophilus asiaticus (strain 5a2)).